The chain runs to 692 residues: MAREFSLENTRNIGIMAHIDAGKTTATERILYYTGRIHKIGETHEGASQMDWMEQEQERGITITSAATTAQWKGHRVNIIDTPGHVDFTVEVERSLRVLDGAVAVLDAQSGVEPQTETVWRQATTYGVPRIVFVNKMDKIGADFLYSVGTIHDRLQANAHPIQLPIGAEDEFNGIIDLVEECAYMYGNDLGTDIQRVEIPEEHKELAEEYRGKLIEAVAELDEEMMMKYLEGEEITVEELKAGIRKATTSVEFFPVICGSAFKNKGVQILLDAVIDYLPSPLDVPAIKGTLPDTDEEVERKSSDEEPFAALAFKIMTDPYVGKLTFFRVYSGVLNSGSYVKNSTKGKRERVGRILQMHANSREEISTVYAGDIAAAVGLKDTTTGDTLCDEKSLVILESMEFPEPVISVAIEPKSKADQDKMGTALSKLSEEDPTFRAHTDQETGQTIIAGMGELHLDIIVDRMRREFKVEANVGAPQVAYRETFRAAAKVEGKFARQSGGRGQFGHVWIEFEPNEEGKGFEFENKIVGGVVPREYIPAVGAGLEDALKNGVLAGYPLVDIKAALVDGSYHDVDSSEMAFKIAASMALKAAVSKCSPVILEPMMKVEVVIPEEYMGDIMGDVTSRRGRVEGMEARGNAQVVRAMVPLSEMFGYATSLRSNTQGRGTFSMVFDHYEEVPKSVSEEIIKKNKGE.

Positions 8–282 (ENTRNIGIMA…AVIDYLPSPL (275 aa)) constitute a tr-type G domain. GTP-binding positions include 17–24 (AHIDAGKT), 81–85 (DTPGH), and 135–138 (NKMD).

This sequence belongs to the TRAFAC class translation factor GTPase superfamily. Classic translation factor GTPase family. EF-G/EF-2 subfamily.

It localises to the cytoplasm. Catalyzes the GTP-dependent ribosomal translocation step during translation elongation. During this step, the ribosome changes from the pre-translocational (PRE) to the post-translocational (POST) state as the newly formed A-site-bound peptidyl-tRNA and P-site-bound deacylated tRNA move to the P and E sites, respectively. Catalyzes the coordinated movement of the two tRNA molecules, the mRNA and conformational changes in the ribosome. The polypeptide is Elongation factor G (Bacillus cereus (strain ATCC 14579 / DSM 31 / CCUG 7414 / JCM 2152 / NBRC 15305 / NCIMB 9373 / NCTC 2599 / NRRL B-3711)).